Reading from the N-terminus, the 206-residue chain is Pyridoxine/pyridoxamine 5'-phosphate oxidase (206 aa).

Residues Arg-53–Lys-58, Tyr-68–Thr-69, Lys-75, and Gln-97 contribute to the FMN site. Substrate is bound at residue Lys-58. Residues Tyr-115, Arg-119, and Ser-123 each coordinate substrate. Residues Gln-132–Ser-133 and Trp-177 each bind FMN. Arg-183 to His-185 lines the substrate pocket. Arg-187 is a binding site for FMN.

This sequence belongs to the pyridoxamine 5'-phosphate oxidase family. Homodimer. FMN is required as a cofactor.

The enzyme catalyses pyridoxamine 5'-phosphate + O2 + H2O = pyridoxal 5'-phosphate + H2O2 + NH4(+). It catalyses the reaction pyridoxine 5'-phosphate + O2 = pyridoxal 5'-phosphate + H2O2. Its pathway is cofactor metabolism; pyridoxal 5'-phosphate salvage; pyridoxal 5'-phosphate from pyridoxamine 5'-phosphate: step 1/1. The protein operates within cofactor metabolism; pyridoxal 5'-phosphate salvage; pyridoxal 5'-phosphate from pyridoxine 5'-phosphate: step 1/1. Catalyzes the oxidation of either pyridoxine 5'-phosphate (PNP) or pyridoxamine 5'-phosphate (PMP) into pyridoxal 5'-phosphate (PLP). In Sinorhizobium fredii (strain NBRC 101917 / NGR234), this protein is Pyridoxine/pyridoxamine 5'-phosphate oxidase.